Here is a 473-residue protein sequence, read N- to C-terminus: UDP-N-acetylmuramate--L-alanine ligase (473 aa).

Residue 112-118 (GTHGKTT) participates in ATP binding.

This sequence belongs to the MurCDEF family.

It localises to the cytoplasm. The catalysed reaction is UDP-N-acetyl-alpha-D-muramate + L-alanine + ATP = UDP-N-acetyl-alpha-D-muramoyl-L-alanine + ADP + phosphate + H(+). It participates in cell wall biogenesis; peptidoglycan biosynthesis. In terms of biological role, cell wall formation. The sequence is that of UDP-N-acetylmuramate--L-alanine ligase from Nitrosomonas eutropha (strain DSM 101675 / C91 / Nm57).